A 233-amino-acid polypeptide reads, in one-letter code: Ribose-5-phosphate isomerase A (233 aa).

Residues 31–34 (SGST), 87–90 (DGAD), and 100–103 (KGGG) contribute to the substrate site. The Proton acceptor role is filled by E109. Substrate is bound at residue K127.

Belongs to the ribose 5-phosphate isomerase family. In terms of assembly, homodimer.

It catalyses the reaction aldehydo-D-ribose 5-phosphate = D-ribulose 5-phosphate. It participates in carbohydrate degradation; pentose phosphate pathway; D-ribose 5-phosphate from D-ribulose 5-phosphate (non-oxidative stage): step 1/1. In terms of biological role, catalyzes the reversible conversion of ribose-5-phosphate to ribulose 5-phosphate. The sequence is that of Ribose-5-phosphate isomerase A from Chlamydia caviae (strain ATCC VR-813 / DSM 19441 / 03DC25 / GPIC) (Chlamydophila caviae).